Consider the following 202-residue polypeptide: Probable nicotinate-nucleotide adenylyltransferase (202 aa).

Belongs to the NadD family.

The catalysed reaction is nicotinate beta-D-ribonucleotide + ATP + H(+) = deamido-NAD(+) + diphosphate. It functions in the pathway cofactor biosynthesis; NAD(+) biosynthesis; deamido-NAD(+) from nicotinate D-ribonucleotide: step 1/1. Its function is as follows. Catalyzes the reversible adenylation of nicotinate mononucleotide (NaMN) to nicotinic acid adenine dinucleotide (NaAD). This Synechococcus sp. (strain JA-2-3B'a(2-13)) (Cyanobacteria bacterium Yellowstone B-Prime) protein is Probable nicotinate-nucleotide adenylyltransferase.